Reading from the N-terminus, the 628-residue chain is NUAK family SNF1-like kinase 2 (628 aa).

The residue at position 1 (methionine 1) is an N-acetylmethionine. One can recognise a Protein kinase domain in the interval tyrosine 53–valine 303. Residues leucine 59–valine 67 and lysine 81 contribute to the ATP site. Residue aspartate 175 is the Proton acceptor of the active site. Threonine 208 is subject to Phosphothreonine. Disordered stretches follow at residues lysine 355–serine 492 and glycine 522–glycine 570. Positions glutamate 428–proline 444 are enriched in pro residues. Serine 435 carries the post-translational modification Phosphoserine. Residues serine 457–glycine 469 are compositionally biased toward low complexity. 4 positions are modified to phosphoserine: serine 523, serine 544, serine 547, and serine 573.

This sequence belongs to the protein kinase superfamily. CAMK Ser/Thr protein kinase family. SNF1 subfamily. It depends on Mg(2+) as a cofactor. In terms of processing, phosphorylated at Thr-208 by STK11/LKB1 in complex with STE20-related adapter-alpha (STRADA) pseudo kinase and CAB39. Autophosphorylation is also possible at Thr-208.

The enzyme catalyses L-seryl-[protein] + ATP = O-phospho-L-seryl-[protein] + ADP + H(+). The catalysed reaction is L-threonyl-[protein] + ATP = O-phospho-L-threonyl-[protein] + ADP + H(+). Its activity is regulated as follows. Activated by phosphorylation on Thr-208. Its function is as follows. Stress-activated kinase involved in tolerance to glucose starvation. Induces cell-cell detachment by increasing F-actin conversion to G-actin. Expression is induced by CD95 or TNF-alpha, via NF-kappa-B. Protects cells from CD95-mediated apoptosis and is required for the increased motility and invasiveness of CD95-activated tumor cells. Phosphorylates LATS1 and LATS2. Plays a key role in neural tube closure during embryonic development through LATS2 phosphorylation and regulation of the nuclear localization of YAP1 a critical downstream regulatory target in the Hippo signaling pathway. This Pongo abelii (Sumatran orangutan) protein is NUAK family SNF1-like kinase 2.